Here is a 266-residue protein sequence, read N- to C-terminus: NADP-dependent mannitol dehydrogenase (266 aa).

Residues Thr31, Ile33, Asn107, and Arg140 each coordinate NADP(+). Catalysis depends on Ser159, which acts as the Proton donor. Residues Tyr174, Lys178, Ile206, and Thr208 each coordinate NADP(+). Catalysis depends on Tyr174, which acts as the Proton acceptor. Residue Lys178 is the Lowers pKa of active site Tyr of the active site.

Belongs to the short-chain dehydrogenases/reductases (SDR) family. As to quaternary structure, homotetramer.

It localises to the vacuole. It catalyses the reaction D-mannitol + NADP(+) = D-fructose + NADPH + H(+). The chain is NADP-dependent mannitol dehydrogenase from Alternaria alternata (Alternaria rot fungus).